Consider the following 264-residue polypeptide: Regulatory protein RecX (264 aa).

This sequence belongs to the RecX family.

It localises to the cytoplasm. In terms of biological role, negatively modulates RecA activity. The protein is Regulatory protein RecX of Bacillus subtilis (strain 168).